A 149-amino-acid polypeptide reads, in one-letter code: Deoxyuridine 5'-triphosphate nucleotidohydrolase (149 aa).

Substrate contacts are provided by residues 68 to 70 (RSG), Asn81, 85 to 87 (LID), and Met95.

The protein belongs to the dUTPase family. It depends on Mg(2+) as a cofactor.

The catalysed reaction is dUTP + H2O = dUMP + diphosphate + H(+). The protein operates within pyrimidine metabolism; dUMP biosynthesis; dUMP from dCTP (dUTP route): step 2/2. Functionally, this enzyme is involved in nucleotide metabolism: it produces dUMP, the immediate precursor of thymidine nucleotides and it decreases the intracellular concentration of dUTP so that uracil cannot be incorporated into DNA. This Methylibium petroleiphilum (strain ATCC BAA-1232 / LMG 22953 / PM1) protein is Deoxyuridine 5'-triphosphate nucleotidohydrolase.